Reading from the N-terminus, the 72-residue chain is Large ribosomal subunit protein uL29 (72 aa).

The protein belongs to the universal ribosomal protein uL29 family.

This is Large ribosomal subunit protein uL29 from Chlamydia trachomatis serovar L2 (strain ATCC VR-902B / DSM 19102 / 434/Bu).